We begin with the raw amino-acid sequence, 323 residues long: ADP-L-glycero-D-manno-heptose-6-epimerase (323 aa).

Residues 10-11, 31-32, K38, R53, 75-79, and N92 contribute to the NADP(+) site; these read FI, DN, and MGACS. Y143 (proton acceptor) is an active-site residue. An NADP(+)-binding site is contributed by K147. N170 is a substrate binding site. Positions 171 and 179 each coordinate NADP(+). K179 (proton acceptor) is an active-site residue. Substrate-binding positions include D181, K188, 202–205, R216, and Y281; that span reads FRSC.

This sequence belongs to the NAD(P)-dependent epimerase/dehydratase family. HldD subfamily. Homopentamer. The cofactor is NADP(+).

The enzyme catalyses ADP-D-glycero-beta-D-manno-heptose = ADP-L-glycero-beta-D-manno-heptose. The protein operates within nucleotide-sugar biosynthesis; ADP-L-glycero-beta-D-manno-heptose biosynthesis; ADP-L-glycero-beta-D-manno-heptose from D-glycero-beta-D-manno-heptose 7-phosphate: step 4/4. Catalyzes the interconversion between ADP-D-glycero-beta-D-manno-heptose and ADP-L-glycero-beta-D-manno-heptose via an epimerization at carbon 6 of the heptose. The polypeptide is ADP-L-glycero-D-manno-heptose-6-epimerase (Nitratidesulfovibrio vulgaris (strain DP4) (Desulfovibrio vulgaris)).